The chain runs to 140 residues: Required for drug-induced death protein 1 (140 aa).

The segment at 1–95 (MTVGARLRSK…DKPKKRYRRK (95 aa)) is disordered. Over residues 29-53 (EETDAIVEHLEGEDEDPESQDCERE) the composition is skewed to acidic residues. Residues 118 to 140 (LQGFAAAYSAPFGVATSVVSFVR) traverse the membrane as a helical segment.

The protein resides in the membrane. Its function is as follows. Regulates drug efflux through modulation of ABCB1 localization and activity. The sequence is that of Required for drug-induced death protein 1 from Rattus norvegicus (Rat).